The following is a 99-amino-acid chain: MGGVENPVSTDKAIRLPERKQYSSNAEPNPSKTEVKRRIERFPRVRIVAINSHRLPAGAARGSAGSVTGRRVRRKRMITTLRLNHPIPLFPGKQNGFVS.

Residues 1-37 (MGGVENPVSTDKAIRLPERKQYSSNAEPNPSKTEVKR) form a disordered region. Positions 12–21 (KAIRLPERKQ) are enriched in basic and acidic residues. Polar residues predominate over residues 22–32 (YSSNAEPNPSK).

The protein belongs to the universal ribosomal protein uL23 family. As to quaternary structure, part of the 50S ribosomal subunit.

The protein resides in the plastid. Its subcellular location is the chloroplast. Binds to 23S rRNA. The chain is Large ribosomal subunit protein uL23cz/uL23cy (rpl23-A) from Selaginella uncinata (Blue spike-moss).